A 786-amino-acid chain; its full sequence is Endonuclease MutS2 (786 aa).

332-339 (GPNTGGKT) contacts ATP. Residues 711–786 (VDLRGMDSIE…GTGVTIVELK (76 aa)) enclose the Smr domain.

It belongs to the DNA mismatch repair MutS family. MutS2 subfamily. As to quaternary structure, homodimer. Binds to stalled ribosomes, contacting rRNA.

Functionally, endonuclease that is involved in the suppression of homologous recombination and thus may have a key role in the control of bacterial genetic diversity. Its function is as follows. Acts as a ribosome collision sensor, splitting the ribosome into its 2 subunits. Detects stalled/collided 70S ribosomes which it binds and splits by an ATP-hydrolysis driven conformational change. Acts upstream of the ribosome quality control system (RQC), a ribosome-associated complex that mediates the extraction of incompletely synthesized nascent chains from stalled ribosomes and their subsequent degradation. Probably generates substrates for RQC. The polypeptide is Endonuclease MutS2 (Clostridium kluyveri (strain NBRC 12016)).